Reading from the N-terminus, the 179-residue chain is Large ribosomal subunit protein uL6 (179 aa).

This sequence belongs to the universal ribosomal protein uL6 family. In terms of assembly, part of the 50S ribosomal subunit.

This protein binds to the 23S rRNA, and is important in its secondary structure. It is located near the subunit interface in the base of the L7/L12 stalk, and near the tRNA binding site of the peptidyltransferase center. The polypeptide is Large ribosomal subunit protein uL6 (Leptospira interrogans serogroup Icterohaemorrhagiae serovar copenhageni (strain Fiocruz L1-130)).